A 276-amino-acid polypeptide reads, in one-letter code: Ribosomal RNA small subunit methyltransferase I (276 aa).

The protein belongs to the methyltransferase superfamily. RsmI family.

The protein localises to the cytoplasm. The catalysed reaction is cytidine(1402) in 16S rRNA + S-adenosyl-L-methionine = 2'-O-methylcytidine(1402) in 16S rRNA + S-adenosyl-L-homocysteine + H(+). Its function is as follows. Catalyzes the 2'-O-methylation of the ribose of cytidine 1402 (C1402) in 16S rRNA. This is Ribosomal RNA small subunit methyltransferase I from Mycoplasma pneumoniae (strain ATCC 29342 / M129 / Subtype 1) (Mycoplasmoides pneumoniae).